The following is a 477-amino-acid chain: Trigger factor (477 aa).

The region spanning 174 to 261 (GDIAVVSFKG…LKDLKEKELP (88 aa)) is the PPIase FKBP-type domain. The tract at residues 435–477 (VNEKTTKTSKATKTSKTTKATKTATKTTKTTKTTKTQNKKEKK) is disordered. Over residues 442 to 470 (TSKATKTSKTTKATKTATKTTKTTKTTKT) the composition is skewed to low complexity.

The protein belongs to the FKBP-type PPIase family. Tig subfamily.

The protein resides in the cytoplasm. The catalysed reaction is [protein]-peptidylproline (omega=180) = [protein]-peptidylproline (omega=0). Its function is as follows. Involved in protein export. Acts as a chaperone by maintaining the newly synthesized protein in an open conformation. Functions as a peptidyl-prolyl cis-trans isomerase. This is Trigger factor from Prochlorococcus marinus (strain MIT 9301).